Consider the following 537-residue polypeptide: Lysosomal cobalamin transport escort protein LMBD1 (537 aa).

Over 1–7 (MAAAAAE) the chain is Extracellular. The chain crosses the membrane as a helical span at residues 8 to 28 (LVIGWCIFGLLLLAILAFCWV). Over 29–47 (YVRKYQSQRESEVVSTVTA) the chain is Cytoplasmic. The chain crosses the membrane as a helical span at residues 48 to 68 (IFSLAVALITSALLPVDIFLV). Over 69–97 (SYMKNQNGTFKDWADANVTVQIENTVLYG) the chain is Extracellular. N-linked (GlcNAc...) asparagine glycans are attached at residues Asn-75 and Asn-85. A helical membrane pass occupies residues 98 to 118 (YYTLYSVILFCVFFWIPFVYF). At 119-141 (YYEEKDEDDASKCTQIKTALKYT) the chain is on the cytoplasmic side. The helical transmembrane segment at 142–162 (LGFVVICALLLLVGAFVPLHL) threads the bilayer. Residues 163-185 (PNNNNSTEWEKVKLLFEDLGTGQ) are Extracellular-facing. N-linked (GlcNAc...) asparagine glycosylation is found at Asn-166 and Asn-167. The helical transmembrane segment at 186–206 (GLAALSFSISSLTLIGMLAAI) threads the bilayer. Topologically, residues 207–302 (TYTAYGMSAL…KFCGALRPLK (96 aa)) are cytoplasmic. A YERL motif; mediates interaction with adapter protein complex 2 and is essential for its function in clathrin-mediated endocytosis of INSR motif is present at residues 229-232 (YERL). Residue Thr-235 is modified to Phosphothreonine. Residues 291–294 (WTKF) carry the WTKF motif; mediates interaction with adapter protein complex 2 and is essential for its function in clathrin-mediated endocytosis of INSR motif. Residues 303–323 (IIWGIFFILVALLFVISLFLS) form a helical membrane-spanning segment. Over 324 to 361 (NLDKALHSAGIDSGFIIFGTNLSNPLNMLLPLLQTVFP) the chain is Extracellular. Asn-344 carries N-linked (GlcNAc...) asparagine glycosylation. A helical membrane pass occupies residues 362–382 (LDYILITIIIMYFIFTSMAGI). Over 383–405 (RNIGIWFFWIRLYKIRRGRTRPQ) the chain is Cytoplasmic. Residues 406–426 (ALLFLCMILLLIVLHTSYMIY) form a helical membrane-spanning segment. Residues 427–483 (SLAPQYVMYGSQNYLIESNITSDAHKGNSTLAVPKRCDADAPKDQCTVTRTYIFLHK) lie on the Extracellular side of the membrane. Residues Asn-445 and Asn-454 are each glycosylated (N-linked (GlcNAc...) asparagine). Residues 484–504 (FWFFSAAYYFGNWAFLVVFLI) traverse the membrane as a helical segment. Topologically, residues 505-537 (GLIVSCCKGKKSVIEGVDEDSDLSDDEPSAYSA) are cytoplasmic. A phosphoserine mark is found at Ser-525 and Ser-528.

It belongs to the LIMR family. LMBRD1 subfamily. In terms of assembly, interacts with ABCD4; this interaction induces the translocation of ABCD4 from the endoplasmic reticulum to the lysosome. Interacts with ABCD4 and MMACHC; this interaction ensures the transport of cobalamin from the lysosome to the cytoplasm. Interacts with INSR, adapter protein complex 2 and clathrin heavy chain. In terms of processing, N-glycosylated.

It localises to the endoplasmic reticulum membrane. It is found in the lysosome membrane. The protein localises to the cell membrane. Its subcellular location is the cytoplasmic vesicle. The protein resides in the clathrin-coated vesicle. Functionally, lysosomal membrane chaperone required to export cobalamin (vitamin B12) from the lysosome to the cytosol, allowing its conversion to cofactors. Targets ABCD4 transporter from the endoplasmic reticulum to the lysosome. Then forms a complex with lysosomal ABCD4 and cytoplasmic MMACHC to transport cobalamin across the lysosomal membrane. Acts as an adapter protein which plays an important role in mediating and regulating the internalization of the insulin receptor (INSR). Involved in clathrin-mediated endocytosis of INSR via its interaction with adapter protein complex 2. Essential for the initiation of gastrulation and early formation of mesoderm structures during embryogenesis. This chain is Lysosomal cobalamin transport escort protein LMBD1, found in Mus musculus (Mouse).